A 244-amino-acid chain; its full sequence is Tyrosine recombinase XerD-like (244 aa).

In terms of domain architecture, Core-binding (CB) spans 1-73 (MRDRISAFLE…ACNQFLYFLY (73 aa)). The Tyr recombinase domain occupies 90–244 (AEKKTEKPEI…KTVLTLEKYR (155 aa)). Active-site residues include Lys-150 and Arg-211. The active-site O-(3'-phospho-DNA)-tyrosine intermediate is Tyr-243.

Belongs to the 'phage' integrase family. XerD-like subfamily.

It localises to the cytoplasm. Functionally, putative tyrosine recombinase. Not involved in the cutting and rejoining of the recombining DNA molecules on dif(SL) site. This is Tyrosine recombinase XerD-like from Streptococcus pneumoniae (strain Hungary19A-6).